The sequence spans 384 residues: 5-amino-6-(D-ribitylamino)uracil--L-tyrosine 4-hydroxyphenyl transferase 2 (384 aa).

The 234-residue stretch at 53–286 folds into the Radical SAM core domain; the sequence is VSYVVNRNIY…IAISRVILHT (234 aa). Residues cysteine 67, cysteine 71, and cysteine 74 each contribute to the [4Fe-4S] cluster site.

Belongs to the radical SAM superfamily. CofH family. As to quaternary structure, consists of two subunits, CofG and CofH. [4Fe-4S] cluster is required as a cofactor.

It carries out the reaction 5-amino-6-(D-ribitylamino)uracil + L-tyrosine + S-adenosyl-L-methionine = 5-amino-5-(4-hydroxybenzyl)-6-(D-ribitylimino)-5,6-dihydrouracil + 2-iminoacetate + 5'-deoxyadenosine + L-methionine + H(+). It functions in the pathway cofactor biosynthesis; coenzyme F0 biosynthesis. Catalyzes the radical-mediated synthesis of 5-amino-5-(4-hydroxybenzyl)-6-(D-ribitylimino)-5,6-dihydrouracil from 5-amino-6-(D-ribitylamino)uracil and L-tyrosine. The protein is 5-amino-6-(D-ribitylamino)uracil--L-tyrosine 4-hydroxyphenyl transferase 2 of Methanosarcina mazei (strain ATCC BAA-159 / DSM 3647 / Goe1 / Go1 / JCM 11833 / OCM 88) (Methanosarcina frisia).